Reading from the N-terminus, the 264-residue chain is uncharacterized protein (264 aa).

The chain crosses the membrane as a helical span at residues 7-27; it reads LTLGICLVLLIILIVGYVIMT.

The protein belongs to the staphylococcal tandem lipoprotein family.

The protein resides in the cell membrane. This is an uncharacterized protein from Staphylococcus aureus (strain N315).